The sequence spans 90 residues: uncharacterized protein (90 aa).

The stretch at 36 to 82 (DQEYSDAQMQLEDAVNALNKLWLSSNDQQREQLYRMRLQLQSLQNNM) forms a coiled coil.

This is an uncharacterized protein from Bacillus subtilis (strain 168).